Here is a 135-residue protein sequence, read N- to C-terminus: Large ribosomal subunit protein uL16c (135 aa).

Belongs to the universal ribosomal protein uL16 family. As to quaternary structure, part of the 50S ribosomal subunit.

It is found in the plastid. Its subcellular location is the chloroplast. In Daucus carota (Wild carrot), this protein is Large ribosomal subunit protein uL16c.